A 123-amino-acid chain; its full sequence is Small ribosomal subunit protein uS12 (123 aa).

At Asp-89 the chain carries 3-methylthioaspartic acid.

Belongs to the universal ribosomal protein uS12 family. In terms of assembly, part of the 30S ribosomal subunit. Contacts proteins S8 and S17. May interact with IF1 in the 30S initiation complex.

Its function is as follows. With S4 and S5 plays an important role in translational accuracy. Interacts with and stabilizes bases of the 16S rRNA that are involved in tRNA selection in the A site and with the mRNA backbone. Located at the interface of the 30S and 50S subunits, it traverses the body of the 30S subunit contacting proteins on the other side and probably holding the rRNA structure together. The combined cluster of proteins S8, S12 and S17 appears to hold together the shoulder and platform of the 30S subunit. This is Small ribosomal subunit protein uS12 from Brucella anthropi (strain ATCC 49188 / DSM 6882 / CCUG 24695 / JCM 21032 / LMG 3331 / NBRC 15819 / NCTC 12168 / Alc 37) (Ochrobactrum anthropi).